The sequence spans 664 residues: Protein IQ-DOMAIN 28 (664 aa).

The interval 1-85 is disordered; that stretch reads MGKTPGKWIK…DESKDNLESR (85 aa). Residues 51–64 show a composition bias toward low complexity; the sequence is VDPPVVSSQPVPAS. Over residues 76–85 the composition is skewed to basic and acidic residues; the sequence is DESKDNLESR. IQ domains lie at 93-121, 122-140, and 144-170; these read LEQA…GIIR, LQAV…ATYS, and GIVK…QKKH. Positions 106-116 are calmodulin-binding; sequence AHQARRAFRTL. Disordered stretches follow at residues 244-488, 502-573, and 637-664; these read EIPK…KEKD, DEKS…SGRK, and AKGS…DWKR. A Nuclear localization signal 1 motif is present at residues 251 to 258; sequence KKRNYQAV. A compositionally biased stretch (basic and acidic residues) spans 305-315; the sequence is DPLRNESDKAN. The segment covering 339–353 has biased composition (low complexity); sequence SPSLKRSSLSNGSKK. A Nuclear localization signal 2 motif is present at residues 351 to 358; that stretch reads SKKATLRS. 3 stretches are compositionally biased toward basic and acidic residues: residues 358–367, 427–447, and 502–532; these read SAEKKKKDIP, TEKE…KVLE, and DEKS…KCAD. Polar residues predominate over residues 536-547; sequence SSENGNVGSDNT. The segment covering 652–664 has biased composition (basic and acidic residues); the sequence is DITHKSTRTDWKR.

It belongs to the IQD family. In terms of assembly, binds to multiple calmodulin (CaM) in the presence of Ca(2+) and CaM-like proteins.

Its subcellular location is the nucleus. It localises to the cytoplasm. It is found in the cytoskeleton. In terms of biological role, may be involved in cooperative interactions with calmodulins or calmodulin-like proteins. Recruits calmodulin proteins to microtubules, thus being a potential scaffold in cellular signaling and trafficking. May associate with nucleic acids and regulate gene expression at the transcriptional or post-transcriptional level. The chain is Protein IQ-DOMAIN 28 from Arabidopsis thaliana (Mouse-ear cress).